The following is an 855-amino-acid chain: Valine--tRNA ligase (855 aa).

The 'HIGH' region motif lies at 44 to 54 (PYPTGNFHIGN). Residues 522–526 (KMSKS) carry the 'KMSKS' region motif. K525 is a binding site for ATP.

Belongs to the class-I aminoacyl-tRNA synthetase family. ValS type 2 subfamily.

It is found in the cytoplasm. It carries out the reaction tRNA(Val) + L-valine + ATP = L-valyl-tRNA(Val) + AMP + diphosphate. In terms of biological role, catalyzes the attachment of valine to tRNA(Val). As ValRS can inadvertently accommodate and process structurally similar amino acids such as threonine, to avoid such errors, it has a 'posttransfer' editing activity that hydrolyzes mischarged Thr-tRNA(Val) in a tRNA-dependent manner. In Methanothrix thermoacetophila (strain DSM 6194 / JCM 14653 / NBRC 101360 / PT) (Methanosaeta thermophila), this protein is Valine--tRNA ligase.